The following is a 543-amino-acid chain: CTP synthase (543 aa).

The amidoligase domain stretch occupies residues 1–267; the sequence is MKQTKYIFVT…LNPIAEILDL (267 aa). CTP is bound at residue serine 15. Serine 15 lines the UTP pocket. ATP-binding positions include 16–21 and aspartate 73; that span reads SLGKGI. The Mg(2+) site is built by aspartate 73 and glutamate 141. CTP is bound by residues 148–150, 188–193, and lysine 224; these read DIE and KTKPTQ. UTP is bound by residues 188–193 and lysine 224; that span reads KTKPTQ. One can recognise a Glutamine amidotransferase type-1 domain in the interval 292 to 543; sequence KIAFVGKYVD…IKAAINYEDN (252 aa). Glycine 354 lines the L-glutamine pocket. Cysteine 381 (nucleophile; for glutamine hydrolysis) is an active-site residue. L-glutamine is bound by residues 382 to 385, glutamate 405, and arginine 473; that span reads LGMQ. Residues histidine 516 and glutamate 518 contribute to the active site.

The protein belongs to the CTP synthase family. In terms of assembly, homotetramer.

It catalyses the reaction UTP + L-glutamine + ATP + H2O = CTP + L-glutamate + ADP + phosphate + 2 H(+). It carries out the reaction L-glutamine + H2O = L-glutamate + NH4(+). The catalysed reaction is UTP + NH4(+) + ATP = CTP + ADP + phosphate + 2 H(+). The protein operates within pyrimidine metabolism; CTP biosynthesis via de novo pathway; CTP from UDP: step 2/2. Its activity is regulated as follows. Allosterically activated by GTP, when glutamine is the substrate; GTP has no effect on the reaction when ammonia is the substrate. The allosteric effector GTP functions by stabilizing the protein conformation that binds the tetrahedral intermediate(s) formed during glutamine hydrolysis. Inhibited by the product CTP, via allosteric rather than competitive inhibition. Its function is as follows. Catalyzes the ATP-dependent amination of UTP to CTP with either L-glutamine or ammonia as the source of nitrogen. Regulates intracellular CTP levels through interactions with the four ribonucleotide triphosphates. The protein is CTP synthase of Campylobacter jejuni subsp. doylei (strain ATCC BAA-1458 / RM4099 / 269.97).